Reading from the N-terminus, the 135-residue chain is Ribosome-binding factor A (135 aa).

The protein belongs to the RbfA family. As to quaternary structure, monomer. Binds 30S ribosomal subunits, but not 50S ribosomal subunits or 70S ribosomes.

The protein localises to the cytoplasm. One of several proteins that assist in the late maturation steps of the functional core of the 30S ribosomal subunit. Associates with free 30S ribosomal subunits (but not with 30S subunits that are part of 70S ribosomes or polysomes). Required for efficient processing of 16S rRNA. May interact with the 5'-terminal helix region of 16S rRNA. The protein is Ribosome-binding factor A of Rhizobium meliloti (strain 1021) (Ensifer meliloti).